The sequence spans 558 residues: Glypican-1 (558 aa).

A signal peptide spans 1 to 23 (MELRARGWWLLCAAAALVACTRG). 7 disulfides stabilise this stretch: Cys32/Cys68, Cys62/Cys256, Cys69/Cys259, Cys191/Cys343, Cys246/Cys279, Cys268/Cys415, and Cys272/Cys401. 2 N-linked (GlcNAc...) asparagine glycosylation sites follow: Asn79 and Asn116. The segment at 478–531 (FQDASDDGSGSGSGGGCPDDACGRRVSKKSSSSRTPLIHALPGLSEQEGQKTSA) is disordered. 3 O-linked (Xyl...) (heparan sulfate) serine glycosylation sites follow: Ser486, Ser488, and Ser490. The GPI-anchor amidated serine moiety is linked to residue Ser530. A propeptide spans 531–558 (AATRPEPHYFFLLFLFTLVLAAARPRWR) (removed in mature form).

The protein belongs to the glypican family. In terms of processing, S-nitrosylated in a Cu(2+)-dependent manner. Nitric acid (NO) is released from the nitrosylated cysteines by ascorbate or by some other reducing agent, in a Cu(2+) or Zn(2+) dependent manner. This free nitric oxide is then capable of cleaving the heparan sulfate side chains. N- and O-glycosylated. N-glycosylation is mainly of the complex type containing sialic acid. O-glycosylated with heparan sulfate. The heparan sulfate chains can be cleaved either by the action of heparanase or, degraded by a deaminative process that uses nitric oxide (NO) released from the S-nitrosylated cysteines. This process is triggered by ascorbate, or by some other reducing agent, in a Cu(2+)- or Zn(2+) dependent manner. Cu(2+) ions are provided by ceruloproteins such as APP, PRNP or CP which associate with GCP1 in intracellular compartments or lipid rafts. Post-translationally, this cell-associated glypican is further processed to give rise to a medium-released species. Nervous system.

The protein resides in the cell membrane. It is found in the endosome. Its subcellular location is the secreted. The protein localises to the extracellular space. Functionally, cell surface proteoglycan that bears heparan sulfate. May act as a catalyst in increasing the rate of conversion of prion protein PRPN(C) to PRNP(Sc) via associating (via the heparan sulfate side chains) with both forms of PRPN, targeting them to lipid rafts and facilitating their interaction. Required for proper skeletal muscle differentiation by sequestering FGF2 in lipid rafts preventing its binding to receptors (FGFRs) and inhibiting the FGF-mediated signaling. Binds Cu(2+) or Zn(2+) ions. Binds, via the heparan sulfate side chains, alpha-4 (V) collagen and participates in Schwann cell myelination. This is Glypican-1 (Gpc1) from Rattus norvegicus (Rat).